The following is a 142-amino-acid chain: Large-conductance mechanosensitive channel (142 aa).

3 consecutive transmembrane segments (helical) span residues 14-34 (VMDL…VTSV), 38-58 (LVMP…NYFL), and 82-102 (GSFI…FLLV).

Belongs to the MscL family. In terms of assembly, homopentamer.

The protein resides in the cell inner membrane. In terms of biological role, channel that opens in response to stretch forces in the membrane lipid bilayer. May participate in the regulation of osmotic pressure changes within the cell. The chain is Large-conductance mechanosensitive channel from Sinorhizobium fredii (strain NBRC 101917 / NGR234).